Here is a 460-residue protein sequence, read N- to C-terminus: 3-isopropylmalate dehydratase large subunit (460 aa).

3 residues coordinate [4Fe-4S] cluster: C338, C398, and C401.

It belongs to the aconitase/IPM isomerase family. LeuC type 1 subfamily. Heterodimer of LeuC and LeuD. Requires [4Fe-4S] cluster as cofactor.

It carries out the reaction (2R,3S)-3-isopropylmalate = (2S)-2-isopropylmalate. Its pathway is amino-acid biosynthesis; L-leucine biosynthesis; L-leucine from 3-methyl-2-oxobutanoate: step 2/4. Functionally, catalyzes the isomerization between 2-isopropylmalate and 3-isopropylmalate, via the formation of 2-isopropylmaleate. The chain is 3-isopropylmalate dehydratase large subunit from Streptococcus thermophilus (strain ATCC BAA-250 / LMG 18311).